Consider the following 493-residue polypeptide: Galactose-1-phosphate uridylyltransferase (493 aa).

This sequence belongs to the galactose-1-phosphate uridylyltransferase type 2 family.

The protein localises to the cytoplasm. It carries out the reaction alpha-D-galactose 1-phosphate + UDP-alpha-D-glucose = alpha-D-glucose 1-phosphate + UDP-alpha-D-galactose. Its pathway is carbohydrate metabolism; galactose metabolism. This is Galactose-1-phosphate uridylyltransferase from Streptococcus salivarius.